A 218-amino-acid chain; its full sequence is UPF0177 protein YaiF (218 aa).

5 helical membrane-spanning segments follow: residues 8–28 (SIIIATAFFLFILSQLPAVFL), 48–68 (FIILTLVVVTICIFIGIKCGF), 81–101 (ILLIFSLLIITFFIQKFVVQF), 123–143 (ILSSLLFPGQFVAVSILAPIL), and 163–183 (FFLSCFFFSYVHSGFSWDILG).

It belongs to the UPF0177 family.

It is found in the cell membrane. The chain is UPF0177 protein YaiF (yaiF) from Lactococcus lactis subsp. lactis (strain IL1403) (Streptococcus lactis).